The chain runs to 105 residues: DNA-directed RNA polymerase subunit omega (105 aa).

Belongs to the RNA polymerase subunit omega family. The RNAP catalytic core consists of 2 alpha, 1 beta, 1 beta' and 1 omega subunit. When a sigma factor is associated with the core the holoenzyme is formed, which can initiate transcription.

It carries out the reaction RNA(n) + a ribonucleoside 5'-triphosphate = RNA(n+1) + diphosphate. Promotes RNA polymerase assembly. Latches the N- and C-terminal regions of the beta' subunit thereby facilitating its interaction with the beta and alpha subunits. In Streptococcus pyogenes serotype M12 (strain MGAS2096), this protein is DNA-directed RNA polymerase subunit omega.